The chain runs to 96 residues: uncharacterized protein (96 aa).

An N-terminal signal peptide occupies residues 1–19; the sequence is MKQIIPALITLSFSPMAIA.

This is an uncharacterized protein from Synechocystis sp. (strain ATCC 27184 / PCC 6803 / Kazusa).